Reading from the N-terminus, the 308-residue chain is uncharacterized protein (308 aa).

The segment at 158–221 (GDSNAETFEE…DSINHGESSE (64 aa)) is disordered. Residues 206-221 (RNGDRSDSINHGESSE) are compositionally biased toward basic and acidic residues.

This is an uncharacterized protein from Arabidopsis thaliana (Mouse-ear cress).